Consider the following 276-residue polypeptide: Large ribosomal subunit protein uL2 (276 aa).

A disordered region spans residues 219-276 (TVRGSVMNPNDHPHGGGEGRSPIGRPSPVTPWGKPALGYKTRKKNKASNKLIVSRRTK). Residues 258–276 (KTRKKNKASNKLIVSRRTK) are compositionally biased toward basic residues.

Belongs to the universal ribosomal protein uL2 family. In terms of assembly, part of the 50S ribosomal subunit. Forms a bridge to the 30S subunit in the 70S ribosome.

Functionally, one of the primary rRNA binding proteins. Required for association of the 30S and 50S subunits to form the 70S ribosome, for tRNA binding and peptide bond formation. It has been suggested to have peptidyltransferase activity; this is somewhat controversial. Makes several contacts with the 16S rRNA in the 70S ribosome. The polypeptide is Large ribosomal subunit protein uL2 (Clostridioides difficile (strain 630) (Peptoclostridium difficile)).